Here is a 319-residue protein sequence, read N- to C-terminus: N-acetyllactosaminide alpha-1,3-galactosyltransferase-like 1 (319 aa).

Residues methionine 1–glutamate 6 lie on the Cytoplasmic side of the membrane. A helical; Signal-anchor for type II membrane protein membrane pass occupies residues alanine 7–serine 26. At arginine 27–proline 319 the chain is on the lumenal side. Asparagine 89 and asparagine 101 each carry an N-linked (GlcNAc...) asparagine glycan. Substrate is bound by residues phenylalanine 97–phenylalanine 102, alanine 188–asparagine 190, and histidine 210–tryptophan 213. Residue glutamate 278 is the Nucleophile of the active site.

The protein belongs to the glycosyltransferase 6 family. Requires Mn(2+) as cofactor.

It is found in the golgi apparatus. It localises to the golgi stack membrane. It catalyses the reaction a beta-D-galactosyl-(1-&gt;4)-N-acetyl-beta-D-glucosaminyl derivative + UDP-alpha-D-galactose = an alpha-D-galactosyl-(1-&gt;3)-beta-D-galactosyl-(1-&gt;4)-N-acetyl-beta-D-glucosaminyl derivative + UDP + H(+). It participates in protein modification; protein glycosylation. Synthesizes the galactose-alpha(1,3)-galactose group by catalyzing the transfer of a galactose residue, with an alpha-1,3 linkage, on terminal lactosaminide (Gal-beta-1,4-GlcNAc-R) disaccharide borne by a glycoprotein or a glycolipid. The protein is N-acetyllactosaminide alpha-1,3-galactosyltransferase-like 1 (Ggta1l1) of Mus musculus (Mouse).